Consider the following 811-residue polypeptide: MTGIHPVDITSEVKTNFINYAMNVIVDRALPDVRDGLKPVQRRIMYAMLLEGLYSNQKHAKSASVVGEVMKKYHPHGDSSIYDAMVRLAQWWNMRYPMVHPQGNFGSIDGDPPAAMRYTEARMTKVAEELIADLEKETVDLKPNYDETTEEPSVLPAAVPNLLINGATGIAVGMATNIPPHNLTEICNGLLAMIDDPNLTLDGLMEHVTGPDFPTGGRITKTGIREAYATGHSGLKVRGKARIEEKNGRNQIIISEIPYQVNKTNLIQTISAMYKAGKIPDISALRDESDRKDPVRIVVELKRGAIPTLVLNQLYKYTQLQTTYTVINLSIVGGEPRVLPLLNTMQYFLDHRADVVTRRTRYDLRKAEERAHVLEGLLKALDHIDEVISLIRGSNTGAEARDALMVRFGLTEIQSQAILDMRLQRLVGLEREKLQAEFDELQKTIEYLRSILGDEKLLWREIKKEIRAIRDNYGDERRSTITELEEDIGKEDLIAVEDMVITMTKAGYLKRTKLDAYRAQGRGGRGSSGGKLREEDVNTRVFVGSTHDYLLFFTDQGRVFHEKIYDLPEAGRDAKGTHIRNLLPSLREDENIASVLSVGGFDEPGCFIFATRKGVVKKTLITEYGNITSAGLIAINLQPGDELIGVGIVNDIDHVVLATRNGKAMRFESDEVRATGRATQGVIGIRLREGEDDAVVSMALVPGGDEASELLAVSECGLGKRTPVGDYPAKGRGGMGVITLDVTEKTGKLVTLARVAGNEELMVLTEKGTVIRTRVEEVRVTGRNAQGVKVINIAERDSVISAFPIRREDEL.

In terms of domain architecture, Topo IIA-type catalytic spans 30-493 (LPDVRDGLKP…LEEDIGKEDL (464 aa)). The active-site O-(5'-phospho-DNA)-tyrosine intermediate is Tyr-118. Residues 520-526 (QGRGGRG) carry the GyrA-box motif.

This sequence belongs to the type II topoisomerase GyrA/ParC subunit family. In terms of assembly, heterotetramer, composed of two GyrA and two GyrB chains. In the heterotetramer, GyrA contains the active site tyrosine that forms a transient covalent intermediate with DNA, while GyrB binds cofactors and catalyzes ATP hydrolysis.

Its subcellular location is the cytoplasm. The enzyme catalyses ATP-dependent breakage, passage and rejoining of double-stranded DNA.. In terms of biological role, a type II topoisomerase that negatively supercoils closed circular double-stranded (ds) DNA in an ATP-dependent manner to modulate DNA topology and maintain chromosomes in an underwound state. Negative supercoiling favors strand separation, and DNA replication, transcription, recombination and repair, all of which involve strand separation. Also able to catalyze the interconversion of other topological isomers of dsDNA rings, including catenanes and knotted rings. Type II topoisomerases break and join 2 DNA strands simultaneously in an ATP-dependent manner. The polypeptide is DNA gyrase subunit A (Deinococcus deserti (strain DSM 17065 / CIP 109153 / LMG 22923 / VCD115)).